Here is a 117-residue protein sequence, read N- to C-terminus: uncharacterized protein (117 aa).

This is an uncharacterized protein from Escherichia coli O6:H1 (strain CFT073 / ATCC 700928 / UPEC).